The sequence spans 827 residues: Cell surface glycoprotein (827 aa).

The N-terminal stretch at M1–A34 is a signal peptide. N47 carries N-linked (Glc...) asparagine glycosylation. Polar residues predominate over residues P73–L102. A disordered region spans residues P73–G111. N117, N308, N313, N532, and N766 each carry an N-linked (Glc...) asparagine glycan. The interval S755–P804 is disordered. A compositionally biased stretch (low complexity) spans T761–T787. A PGF sorting signal motif is present at residues P804–F806. The chain crosses the membrane as a helical span at residues P804–L823.

Belongs to the halobacterial S-layer protein family. Post-translationally, O-glycosylated on 4 to 6 threonine residues; glycans consist of Glc-Gal disaccharides. In terms of processing, the N-terminus is not blocked. Cleaved by the archaeosortase ArtA at the C-terminus, with removal of a short hydrophobic segment. Post-translationally, lipidation: Following protein translocation across the membrane, the protein is modified by a derivative of mevalonic acid. Lipid modification is ArtA-dependent and requires the conserved C-terminal PGF motif. In terms of processing, asn-47 and Asn-117 are glycosylated by a pentasaccharide comprising a hexose, 2 hexuronic acids, a methyl ester of a hexuronic acid and mannose. The pentasaccharide is produced in 2 steps: first, a tetrasaccharide is built on dolichol-P and then transferred to the S-layer glycoprotein. Then, the mannose fifth sugar is attached to a distinct molecule of dolichol-P and is transferred to the protein already carrying the tetrasaccharide. The pentasaccharide on Asn-47 was initially thought to contain mannose, galactose, glucose and idose with a relative ratio of 1/3/3/0.2. However, it was later shown that it is not the case. Under low-salt conditions (1.75 M instead of 3.4 M), a tetrasaccharide consisting of a sulfated hexose, 2 hexoses and rhamnose is attached to Asn-532.

Its subcellular location is the secreted. The protein resides in the cell wall. It is found in the S-layer. The protein localises to the cell membrane. Its function is as follows. S-layer protein. The S-layer is a paracrystalline mono-layered assembly of proteins which coat the surface of the cell. This Haloferax volcanii (strain ATCC 29605 / DSM 3757 / JCM 8879 / NBRC 14742 / NCIMB 2012 / VKM B-1768 / DS2) (Halobacterium volcanii) protein is Cell surface glycoprotein (csg).